An 81-amino-acid polypeptide reads, in one-letter code: Sulfur carrier protein TusA (81 aa).

Cys-19 (cysteine persulfide intermediate) is an active-site residue.

The protein belongs to the sulfur carrier protein TusA family. Interacts with IscS.

The protein localises to the cytoplasm. It participates in tRNA modification. Sulfur carrier protein involved in sulfur trafficking in the cell. Part of a sulfur-relay system required for 2-thiolation during synthesis of 2-thiouridine of the modified wobble base 5-methylaminomethyl-2-thiouridine (mnm(5)s(2)U) in tRNA. Interacts with IscS and stimulates its cysteine desulfurase activity. Accepts an activated sulfur from IscS, which is then transferred to TusD, and thus determines the direction of sulfur flow from IscS to 2-thiouridine formation. Also appears to be involved in sulfur transfer for the biosynthesis of molybdopterin. This chain is Sulfur carrier protein TusA, found in Escherichia fergusonii (strain ATCC 35469 / DSM 13698 / CCUG 18766 / IAM 14443 / JCM 21226 / LMG 7866 / NBRC 102419 / NCTC 12128 / CDC 0568-73).